The primary structure comprises 297 residues: Phosphoribosylaminoimidazole-succinocarboxamide synthase (297 aa).

This sequence belongs to the SAICAR synthetase family.

The enzyme catalyses 5-amino-1-(5-phospho-D-ribosyl)imidazole-4-carboxylate + L-aspartate + ATP = (2S)-2-[5-amino-1-(5-phospho-beta-D-ribosyl)imidazole-4-carboxamido]succinate + ADP + phosphate + 2 H(+). It participates in purine metabolism; IMP biosynthesis via de novo pathway; 5-amino-1-(5-phospho-D-ribosyl)imidazole-4-carboxamide from 5-amino-1-(5-phospho-D-ribosyl)imidazole-4-carboxylate: step 1/2. This is Phosphoribosylaminoimidazole-succinocarboxamide synthase from Mycobacterium sp. (strain JLS).